The chain runs to 268 residues: Receptor expression-enhancing protein 2 (268 aa).

The next 2 membrane-spanning stretches (helical) occupy residues 1-21 and 35-55; these read MVSWIISRMVVLAFGTLYPAY and YVKWMMYWIVFALFTTAETIT. The segment at 170–268 is disordered; that stretch reads GDDTHTAATL…TTANNVAESP (99 aa). Positions 180–196 are enriched in low complexity; sequence PRAKTATRTVRATPVPA. Residues 199-216 show a composition bias toward basic and acidic residues; it reads ESQHSSRSDDQSDSRTEH. A compositionally biased stretch (low complexity) spans 228-248; it reads RIAITRAAKKPAAAKTEQTTK. Over residues 249–258 the composition is skewed to basic residues; that stretch reads TVKKAPKKKP.

It belongs to the DP1 family. Interacts with odorant receptor proteins.

The protein resides in the membrane. May enhance the cell surface expression of odorant receptors. This is Receptor expression-enhancing protein 2 (reep2) from Danio rerio (Zebrafish).